The following is a 202-amino-acid chain: Shikimate kinase (202 aa).

20–25 (GSGKST) is an ATP binding site. Ser24 is a Mg(2+) binding site. Substrate contacts are provided by Asp42, Arg66, and Gly88. Residue Arg126 coordinates ATP. Arg153 provides a ligand contact to substrate.

Belongs to the shikimate kinase family. Monomer. It depends on Mg(2+) as a cofactor.

It is found in the cytoplasm. It catalyses the reaction shikimate + ATP = 3-phosphoshikimate + ADP + H(+). Its pathway is metabolic intermediate biosynthesis; chorismate biosynthesis; chorismate from D-erythrose 4-phosphate and phosphoenolpyruvate: step 5/7. Its function is as follows. Catalyzes the specific phosphorylation of the 3-hydroxyl group of shikimic acid using ATP as a cosubstrate. The chain is Shikimate kinase from Chlorobium luteolum (strain DSM 273 / BCRC 81028 / 2530) (Pelodictyon luteolum).